Reading from the N-terminus, the 404-residue chain is MMTYEYILVRYGEMTTKGKNRSKFVSTLKDNVKFKLKKFPNIKIDATHDRMYIQLNGEDHEAVSERLKDVFGIHKFNLAMKVPSELEDIKKGALAAFLQVKGDVKTFKITVHRSYKHFPMRTMELLPEIGGHILENTEDITVDVHNPDVNVRVEIRSGYSYIMCDERMGAGGLPVGVGGKVMVLLSGGIDSPVAAYLTMKRGVSVEAVHFHSPPFTSERAKQKVIDLAQELTKYCKRVTLHLVPFTEVQKTINKEIPSSYSMTVMRRMMMRITERIAEERNALAITTGESLGQVASQTLDSMHTINEVTNYPVIRPLITMDKLEIIKIAEEIGTYDISIRPYEDCCTVFTPASPATKPKREKANRFEAKYDFTPLIDEAVANKETMVLQTVEVVAEEEKFEELF.

The THUMP domain maps to 61-166; that stretch reads EAVSERLKDV…SGYSYIMCDE (106 aa). ATP contacts are provided by residues 184 to 185, 209 to 210, arginine 266, glycine 288, and glutamine 297; these read LL and HF.

This sequence belongs to the ThiI family.

The protein localises to the cytoplasm. It carries out the reaction [ThiI sulfur-carrier protein]-S-sulfanyl-L-cysteine + a uridine in tRNA + 2 reduced [2Fe-2S]-[ferredoxin] + ATP + H(+) = [ThiI sulfur-carrier protein]-L-cysteine + a 4-thiouridine in tRNA + 2 oxidized [2Fe-2S]-[ferredoxin] + AMP + diphosphate. The enzyme catalyses [ThiS sulfur-carrier protein]-C-terminal Gly-Gly-AMP + S-sulfanyl-L-cysteinyl-[cysteine desulfurase] + AH2 = [ThiS sulfur-carrier protein]-C-terminal-Gly-aminoethanethioate + L-cysteinyl-[cysteine desulfurase] + A + AMP + 2 H(+). The protein operates within cofactor biosynthesis; thiamine diphosphate biosynthesis. In terms of biological role, catalyzes the ATP-dependent transfer of a sulfur to tRNA to produce 4-thiouridine in position 8 of tRNAs, which functions as a near-UV photosensor. Also catalyzes the transfer of sulfur to the sulfur carrier protein ThiS, forming ThiS-thiocarboxylate. This is a step in the synthesis of thiazole, in the thiamine biosynthesis pathway. The sulfur is donated as persulfide by IscS. The sequence is that of Probable tRNA sulfurtransferase from Bacillus cereus (strain AH820).